A 469-amino-acid polypeptide reads, in one-letter code: MYTCAPHFVSIKFPDLHSSKTLRPFGMSKREFKVFALASSVNEASNYIPAAPILIPEGPWNQIPGGVTAAKGFKAVGIYGGLRAKGEKPDLALVTCDVDAAAAGSFTTNMVAAAPVLYCKHALDISQTARAVLINAGQANAATGDAGYQDVLECADTVAMMLKVKREEVLIESTGVIGQRIKKDALLNALPTLVNSLTSSVEGAGSAAVAITTTDLVSKSVAIESQIGGINIRVGGMAKGSGMIHPNMATMLGVITTDALVQTDVWRKMVQTAVNRSFNQITVDGDTSTNDTVIALASGLSGSMSISSIDCTRAIQLQACLDAVMQGLAKSIAWDGEGATCLIEVTVAGTESEVKAAKIARSVASSSLVKAAVYGRDPNWGRIAAAAGYAGIPFHQNKLRILLGDILLMDNGQPLAFDRPAASKYLKMAGETHGTVKIYISVGDGSGIGKAWGCDLSYDYVKINAEYTT.

Residues threonine 213, lysine 239, threonine 250, glutamate 337, asparagine 464, and threonine 469 each contribute to the substrate site. Threonine 250 acts as the Nucleophile in catalysis.

The protein belongs to the ArgJ family. Heterodimer of an alpha and a beta chain.

It is found in the plastid. The protein localises to the chloroplast. The catalysed reaction is N(2)-acetyl-L-ornithine + L-glutamate = N-acetyl-L-glutamate + L-ornithine. It catalyses the reaction L-glutamate + acetyl-CoA = N-acetyl-L-glutamate + CoA + H(+). The protein operates within amino-acid biosynthesis; L-arginine biosynthesis; L-ornithine and N-acetyl-L-glutamate from L-glutamate and N(2)-acetyl-L-ornithine (cyclic): step 1/1. Its pathway is amino-acid biosynthesis; L-arginine biosynthesis; N(2)-acetyl-L-ornithine from L-glutamate: step 1/4. In terms of biological role, catalyzes two activities which are involved in the cyclic version of arginine biosynthesis: the synthesis of acetylglutamate from glutamate and acetyl-CoA, and of ornithine by transacetylation between acetylornithine and glutamate. In Ricinus communis (Castor bean), this protein is Arginine biosynthesis bifunctional protein ArgJ, chloroplastic.